Here is a 1846-residue protein sequence, read N- to C-terminus: Brefeldin A-inhibited guanine nucleotide-exchange protein 1 (1846 aa).

The interval 2–224 (YEGKKTKNMF…QEAKQMERER (223 aa)) is DCB; DCB:DCB domain and DCB:HUS domain interaction. Ser52 carries the phosphoserine modification. Disordered regions lie at residues 216-249 (EAKQ…LRYL), 264-304 (DLEP…ATAA), and 347-410 (ISAS…SPGA). Positions 264 to 277 (DLEPQTHDVDKSLQ) are enriched in basic and acidic residues. Phosphoserine is present on residues Ser286, Ser289, and Ser290. Polar residues-rich tracts occupy residues 348–357 (SASTEGNTGT) and 391–406 (SVSS…SSGP). Ser394 and Ser407 each carry phosphoserine. The segment at 554-574 (ADAQSVVDIYVNYDCDLNAAN) is HUS; DCB:HUS domain interaction. The disordered stretch occupies residues 631–684 (PNSQTTLGQEKPSEQEISEVKHPETINRYGSLNSLESTSSSGIGSYSTQMSGTD). The segment covering 641–655 (KPSEQEISEVKHPET) has biased composition (basic and acidic residues). Over residues 661–681 (SLNSLESTSSSGIGSYSTQMS) the composition is skewed to low complexity. An SEC7 domain is found at 688–877 (QFEVLKQQKE…SAIYNEIAGK (190 aa)). A Nuclear localization signal (NLS) motif is present at residues 708 to 712 (KKPKR). Phosphoserine is present on residues Ser1076, Ser1563, and Ser1566.

Homodimer. Interacts with ARFGEF2/BIG2; both proteins are probably part of the same or very similar macromolecular complexes. Interacts with FKBP2. Interacts with MYO9B. Interacts with PRKAR1A and PRKAR2A. Interacts with PPP1CC. Interacts with NCL, FBL, NUP62 and U3 small nucleolar RNA. Interacts with DPY30. Interacts with PDE3A. Interacts with KANK1. Interacts with TBC1D22A and TBC1D22B. Post-translationally, phosphorylated. In vitro phosphorylated by PKA reducing its GEF activity and dephosphorylated by phosphatase PP1.

It localises to the cytoplasm. The protein localises to the perinuclear region. The protein resides in the golgi apparatus. Its subcellular location is the trans-Golgi network. It is found in the nucleus. It localises to the nucleolus. The protein localises to the nucleus matrix. The protein resides in the membrane. Its activity is regulated as follows. Inhibited by brefeldin A. Promotes guanine-nucleotide exchange on ARF1 and ARF3. Promotes the activation of ARF1/ARF3 through replacement of GDP with GTP. Involved in vesicular trafficking. Required for the maintenance of Golgi structure; the function may be independent of its GEF activity. Required for the maturation of integrin beta-1 in the Golgi. Involved in the establishment and persistence of cell polarity during directed cell movement in wound healing. Proposed to act as A kinase-anchoring protein (AKAP) and may mediate crosstalk between Arf and PKA pathways. Inhibits GAP activity of MYO9B probably through competitive RhoA binding. The function in the nucleus remains to be determined. The polypeptide is Brefeldin A-inhibited guanine nucleotide-exchange protein 1 (Arfgef1) (Mus musculus (Mouse)).